We begin with the raw amino-acid sequence, 129 residues long: Tumor necrosis factor receptor superfamily member 12A (129 aa).

The signal sequence occupies residues 1 to 27 (MASAWPRSLPQILVLGFGLVLMRAAAG). The Extracellular portion of the chain corresponds to 28–80 (EQAPGTSPCSSGSSWSADLDKCMDCASCPARPHSDFCLGCAAAPPAHFRLLWP). Intrachain disulfides connect Cys36–Cys49, Cys52–Cys67, and Cys55–Cys64. Residues 36–67 (CSSGSSWSADLDKCMDCASCPARPHSDFCLGC) form a TNFR-Cys; atypical repeat. Residues 81-101 (ILGGALSLVLVLALVSSFLVW) form a helical membrane-spanning segment. Over 102 to 129 (RRCRRREKFTTPIEETGGEGCPGVALIQ) the chain is Cytoplasmic.

Associates with TRAF1 and TRAF2, and probably also with TRAF3. As to expression, highly expressed in fetal heart, intestine, kidney, liver, lung and skin, and in adult heart and ovary. Intermediate expression in adult kidney, lung and skin.

The protein resides in the membrane. In terms of biological role, receptor for TNFSF12/TWEAK. Weak inducer of apoptosis in some cell types. Promotes angiogenesis and the proliferation of endothelial cells. May modulate cellular adhesion to matrix proteins. The sequence is that of Tumor necrosis factor receptor superfamily member 12A (Tnfrsf12a) from Mus musculus (Mouse).